We begin with the raw amino-acid sequence, 494 residues long: MLASGLLLVASVAFLSVLVLMSVWKQRKLSGKLPPGPTPLPFIGNYLQLNTEKMYSSLMKISQRYGPVFTIHLGPRRVVVLCGQEAVKEALVDQAEEFSGRGEQATFDWLFKGYGVAFSSGERAKQLRRFSIATLRDFGVGKRGIEERIQEEAGFLIESFRKTNGALIDPTFYLSRTVSNVISSIVFGDRFDYEDKEFLSLLRMMLGSFQFTATSTGQLYEMFSSVMKHLPGPQQQAFKELQGLEDFITKKVEQNQRTLDPNSPRDFIDSFLIRMLEEKKNPNTEFYMKNLVLTTLNLFFAGTETVSTTLRYGFLLLMKHPDIEAKVHEEIDRVIGRNRQAKYEDRMKMPYTEAVIHEIQRFADMIPMGLARRVTKDTKFREFLLPKGTEVFPMLGSVLKDPKFFSNPNDFNPKHFLDDKGQFKKSDAFVPFSIGKRYCFGEGLARMELFLFLTNIMQNFCFKSPQAPQDIDVSPRLVGFATIPPNYTMSFLSR.

Position 131 is a phosphoserine (S131). K379 is modified (N6-acetyllysine). C439 provides a ligand contact to heme.

It belongs to the cytochrome P450 family. Heme is required as a cofactor. As to expression, lung.

The protein resides in the endoplasmic reticulum membrane. Its subcellular location is the microsome membrane. The enzyme catalyses an organic molecule + reduced [NADPH--hemoprotein reductase] + O2 = an alcohol + oxidized [NADPH--hemoprotein reductase] + H2O + H(+). Cytochromes P450 are a group of heme-thiolate monooxygenases. In liver microsomes, this enzyme is involved in an NADPH-dependent electron transport pathway. It oxidizes a variety of structurally unrelated compounds, including steroids, fatty acids, and xenobiotics. The protein is Cytochrome P450 2A3 (Cyp2a3) of Rattus norvegicus (Rat).